The sequence spans 290 residues: GTPase Era (290 aa).

Residues 2-169 (KSGFAAILGR…KNKIYENFSE (168 aa)) enclose the Era-type G domain. Residues 10–17 (GRPSTGKS) are G1. 10–17 (GRPSTGKS) contacts GTP. The segment at 36-40 (QTTRN) is G2. The segment at 57 to 60 (DTPG) is G3. GTP contacts are provided by residues 57–61 (DTPGF) and 119–122 (NKVD). Positions 119-122 (NKVD) are G4. The tract at residues 148–150 (ISA) is G5. Residues 200–276 (LKEELPYSLY…NLFLQVKLKK (77 aa)) enclose the KH type-2 domain.

The protein belongs to the TRAFAC class TrmE-Era-EngA-EngB-Septin-like GTPase superfamily. Era GTPase family. As to quaternary structure, monomer.

Its subcellular location is the cytoplasm. The protein resides in the cell inner membrane. An essential GTPase that binds both GDP and GTP, with rapid nucleotide exchange. Plays a role in 16S rRNA processing and 30S ribosomal subunit biogenesis and possibly also in cell cycle regulation and energy metabolism. The protein is GTPase Era of Borrelia garinii subsp. bavariensis (strain ATCC BAA-2496 / DSM 23469 / PBi) (Borreliella bavariensis).